Consider the following 458-residue polypeptide: UDP-N-acetylmuramoylalanine--D-glutamate ligase (458 aa).

124-130 provides a ligand contact to ATP; it reads GSDGKTT.

The protein belongs to the MurCDEF family.

It localises to the cytoplasm. The enzyme catalyses UDP-N-acetyl-alpha-D-muramoyl-L-alanine + D-glutamate + ATP = UDP-N-acetyl-alpha-D-muramoyl-L-alanyl-D-glutamate + ADP + phosphate + H(+). It participates in cell wall biogenesis; peptidoglycan biosynthesis. Functionally, cell wall formation. Catalyzes the addition of glutamate to the nucleotide precursor UDP-N-acetylmuramoyl-L-alanine (UMA). In Clostridium botulinum (strain Kyoto / Type A2), this protein is UDP-N-acetylmuramoylalanine--D-glutamate ligase.